We begin with the raw amino-acid sequence, 424 residues long: Protein arginine N-methyltransferase 2 (424 aa).

Disordered regions lie at residues 67–89 and 151–212; these read DEAQTETNGVNGETSSASTEQKS and YEPL…SSRY. Positions 71 to 89 are enriched in polar residues; sequence TETNGVNGETSSASTEQKS. Low complexity-rich tracts occupy residues 163-173 and 187-201; these read TGQGEDAANEP and ETTAADASAAEASTE. The 220-residue stretch at 205–424 folds into the RMT2 domain; that stretch reads PDVTSSRYLD…YRLPLCKFMD (220 aa). S-adenosyl-L-methionine contacts are provided by residues tyrosine 212, methionine 241, 261-266, 282-284, 309-310, and aspartate 329; these read HGMGIV, EAH, and WQ.

This sequence belongs to the class I-like SAM-binding methyltransferase superfamily. RMT2 methyltransferase family. Monomer.

It is found in the cytoplasm. The protein localises to the nucleus. In terms of biological role, S-adenosyl-L-methionine-dependent protein-arginine N-methyltransferase that methylates the delta-nitrogen atom of arginine residues to form N5-methylarginine (type IV) in target proteins. Monomethylates ribosomal protein L12. The sequence is that of Protein arginine N-methyltransferase 2 from Aspergillus fumigatus (strain ATCC MYA-4609 / CBS 101355 / FGSC A1100 / Af293) (Neosartorya fumigata).